We begin with the raw amino-acid sequence, 66 residues long: Large ribosomal subunit protein bL35c (66 aa).

This sequence belongs to the bacterial ribosomal protein bL35 family.

It is found in the plastid. The protein localises to the chloroplast. The protein is Large ribosomal subunit protein bL35c of Gracilaria tenuistipitata var. liui (Red alga).